Here is a 268-residue protein sequence, read N- to C-terminus: NAC domain-containing protein 41 (268 aa).

The NAC domain occupies 15–160 (LPPGFRFHPT…NWVLCRVFLK (146 aa)). The DNA-binding element occupies 109–166 (VGMKKTLVFYKGKPPNGTRTNWVLHEYRLVDSQQDSLYGQNMNWVLCRVFLKKRSNSN). The tract at residues 166–190 (NSKRKEDEKEEVENEKETETERERE) is disordered. Over residues 180–190 (EKETETERERE) the composition is skewed to basic and acidic residues.

The protein localises to the nucleus. In terms of biological role, transcription activator of the mannan synthase CSLA9. Recognizes and binds to DNA-specific sequence of CSLA9 promoter. The polypeptide is NAC domain-containing protein 41 (Arabidopsis thaliana (Mouse-ear cress)).